The following is a 356-amino-acid chain: MDHRDLSQVTLLMESTLIRTALRTDIQQFEKSFEQIIEQAGVFLATTEEHFISLSLVVMDEDVLIRHLCGFLASKLAIEGFLSFHQQTIQRTSGGDASLAKQVKAATVFVLELIQTLIYHKEAADYPGKHLGMMYDRDVKYFGGTLFHLNPQVNLDEELPELDDYYEDVDELTNYYHGEKLSHPLRQLPGNPWHKFFGNFPETRVEHAADTALFRENPRPGDLTVSIPGTILFLIPEFRQEHEKFRQLMLEHSQLPLPLLLEEARKERVQVIQRRLANVHHGNVEYDSLEPLCRENTDMIPRPEYTLEGNRTFGMQNLTVNSPDLIGDALPEGRIANVASQLEGFPARFLFTNKNK.

The DNA-binding element occupies His-183 to Asn-199.

To N.crassa mta-2.

Its subcellular location is the nucleus. In terms of biological role, transcriptional activator that is required for post-fertilization events. It is required for the developmental events that occur in the female organ after fertilization. The sequence is that of Sporulation minus regulator 1 (SMR1) from Podospora anserina (Pleurage anserina).